The chain runs to 700 residues: ATP-dependent zinc metalloprotease FtsH (700 aa).

Residues 1–20 (MSSDNGSGRQGGDRGGSTGY) lie on the Cytoplasmic side of the membrane. Residues 21 to 41 (NLLMYLGFGAIIATLVALYVL) traverse the membrane as a helical segment. The Periplasmic segment spans residues 42–171 (QMFQTSLDYT…FRHADPPGPW (130 aa)). The helical transmembrane segment at 172–192 (EQHSQLIIGMLLAAMLIYIVV) threads the bilayer. At 193-700 (RRLSAAGSPM…ITAPATERSG (508 aa)) the chain is on the cytoplasmic side. 262-269 (GPPGTGKT) is a binding site for ATP. Zn(2+) is bound at residue histidine 484. Glutamate 485 is an active-site residue. Histidine 488 and aspartate 561 together coordinate Zn(2+).

This sequence in the central section; belongs to the AAA ATPase family. It in the C-terminal section; belongs to the peptidase M41 family. As to quaternary structure, homohexamer. It depends on Zn(2+) as a cofactor.

It localises to the cell inner membrane. Acts as a processive, ATP-dependent zinc metallopeptidase for both cytoplasmic and membrane proteins. Plays a role in the quality control of integral membrane proteins. This Pirellula staleyi (strain ATCC 27377 / DSM 6068 / ICPB 4128) (Pirella staleyi) protein is ATP-dependent zinc metalloprotease FtsH.